The sequence spans 260 residues: UPF0246 protein Bcep18194_A5551 (260 aa).

Belongs to the UPF0246 family.

This Burkholderia lata (strain ATCC 17760 / DSM 23089 / LMG 22485 / NCIMB 9086 / R18194 / 383) protein is UPF0246 protein Bcep18194_A5551.